A 345-amino-acid chain; its full sequence is D-erythrose-4-phosphate dehydrogenase (345 aa).

Residue R11 to I12 participates in NAD(+) binding. Substrate contacts are provided by residues S158 to T160, R204, T217 to K218, and R240. The active-site Nucleophile is the C159. NAD(+) is bound at residue N322.

The protein belongs to the glyceraldehyde-3-phosphate dehydrogenase family. Epd subfamily. As to quaternary structure, homotetramer.

The protein localises to the cytoplasm. It catalyses the reaction D-erythrose 4-phosphate + NAD(+) + H2O = 4-phospho-D-erythronate + NADH + 2 H(+). The protein operates within cofactor biosynthesis; pyridoxine 5'-phosphate biosynthesis; pyridoxine 5'-phosphate from D-erythrose 4-phosphate: step 1/5. Catalyzes the NAD-dependent conversion of D-erythrose 4-phosphate to 4-phosphoerythronate. This chain is D-erythrose-4-phosphate dehydrogenase, found in Vibrio parahaemolyticus serotype O3:K6 (strain RIMD 2210633).